Reading from the N-terminus, the 392-residue chain is MAQHLTTEALRKDFLAVFGQEADQTFFSPGRINLIGEHTDYNGGHVFPAAISLGTYGAARKRDDQVLRFYSANFEDKGIIEVPLADLKFEKEHNWTNYPKGVLHFLQEAGHVIDKGFDFYVYGNIPNGAGLSSSASLELLTGVVAEHLFDLKLERLDLVKIGKQTENNFIGVNSGIMDQFAIGMGADQRAIYLDTNTLEYDLVPLDLKDNVVVIMNTNKRRELADSKYNERRAECEKAVEELQVSLDIQTLGELDEWAVDQYSYLIKDENRLKRARHAVLENQRTLKAQVALQAGDLETFGRLMNASHVSLEHDYEVTGLELDTLVHTAWAQEGVLGARMTGAGFGGCAIALVQKDTVEAFKEAVGKHYEEVVGYAPSFYIAEVAGGTRVLD.

37-40 provides a ligand contact to substrate; the sequence is EHTD. ATP is bound by residues S71 and 128 to 134; that span reads GAGLSSS. Positions 134 and 166 each coordinate Mg(2+). Catalysis depends on D178, which acts as the Proton acceptor. Y228 is a substrate binding site.

The protein belongs to the GHMP kinase family. GalK subfamily.

The protein resides in the cytoplasm. It catalyses the reaction alpha-D-galactose + ATP = alpha-D-galactose 1-phosphate + ADP + H(+). The protein operates within carbohydrate metabolism; galactose metabolism. Functionally, catalyzes the transfer of the gamma-phosphate of ATP to D-galactose to form alpha-D-galactose-1-phosphate (Gal-1-P). The protein is Galactokinase of Streptococcus pneumoniae serotype 4 (strain ATCC BAA-334 / TIGR4).